Here is a 142-residue protein sequence, read N- to C-terminus: Transcription antitermination protein NusB (142 aa).

The protein belongs to the NusB family.

Functionally, involved in transcription antitermination. Required for transcription of ribosomal RNA (rRNA) genes. Binds specifically to the boxA antiterminator sequence of the ribosomal RNA (rrn) operons. This Roseiflexus castenholzii (strain DSM 13941 / HLO8) protein is Transcription antitermination protein NusB.